Here is a 1491-residue protein sequence, read N- to C-terminus: Terminal uridylyltransferase 7 (1491 aa).

T64 is subject to Phosphothreonine. Phosphoserine is present on residues S132 and S172. Residues 165–203 form a disordered region; the sequence is MSEMEAGSPENKKQRSRPRKPRRTRTEDSEQDGDLDGPV. The segment covering 178-187 has biased composition (basic residues); it reads QRSRPRKPRR. The Matrin-type zinc-finger motif lies at 244 to 274; the sequence is YTCKLCDALIDSIPFAHKHIKEKRHKKNLKE. Residues 551–600 form the PAP-associated 1 domain; that stretch reads VGQLWVELLRFYALEFNLADLVISIRVKELISRESKDWPKKRIAIEDPYS. A phosphoserine mark is found at S600 and S747. 2 disordered regions span residues 740–774 and 834–911; these read AELP…KHPE and QSRT…CGEN. The span at 844-857 shows a compositional bias: acidic residues; that stretch reads DDEEEEEEEEEEEE. T865 is modified (phosphothreonine). The span at 885-897 shows a compositional bias: acidic residues; that stretch reads GEEDALSEEDDLA. Position 891 is a phosphoserine (S891). The interval 947 to 1491 is sufficient for monouridylation activity; it reads RKLTFTKGKS…ASVKRTQQES (545 aa). The CCHC-type 1 zinc finger occupies 959-976; that stretch reads VVCSLCKREGHLKKDCPE. UTP-binding positions include 1043 to 1046, 1053 to 1056, N1126, K1148, 1166 to 1170, and H1282; these read SSKN, SDLD, and SYAYT. 2 residues coordinate Mg(2+): D1054 and D1056. Residues 1230–1282 enclose the PAP-associated 2 domain; that stretch reads VGQLWLGLLRFYTEEFDFKEHVISIRRKSLLTTFKKQWTSKYIVIEDPFDLNH. The CCHC-type 2 zinc-finger motif lies at 1341–1358; it reads RCCRICGKIGHFMKDCPM. 2 disordered regions span residues 1362 to 1399 and 1463 to 1491; these read VRRR…EKEV and PQFK…QQES. The segment covering 1377 to 1399 has biased composition (basic and acidic residues); the sequence is SESKEKRSKEDKEIQNKYTEKEV. The CCHC-type 3 zinc finger occupies 1447–1464; that stretch reads KRCFICGREGHIKKECPQ. Polar residues predominate over residues 1470 to 1481; the sequence is GSLSSKYMTQGR.

It belongs to the DNA polymerase type-B-like family. Requires Mg(2+) as cofactor. It depends on Mn(2+) as a cofactor.

Its subcellular location is the cytoplasm. The catalysed reaction is RNA(n) + UTP = RNA(n)-3'-uridine ribonucleotide + diphosphate. Uridylyltransferase that mediates the terminal uridylation of mRNAs with short (less than 25 nucleotides) poly(A) tails, hence facilitating global mRNA decay. Essential for both oocyte maturation and fertility. Through 3' terminal uridylation of mRNA, sculpts, with TUT7, the maternal transcriptome by eliminating transcripts during oocyte growth. Involved in microRNA (miRNA)-induced gene silencing through uridylation of deadenylated miRNA targets. Also acts as a suppressor of miRNA biogenesis by mediating the terminal uridylation of miRNA precursors, including that of let-7 (pre-let-7). Uridylated pre-let-7 RNA is not processed by Dicer and undergo degradation. Pre-let-7 uridylation is strongly enhanced in the presence of LIN28A. Due to functional redundancy between ZCCHC6 and ZCCHC11, the identification of the specific role of each of these proteins is difficult. Involved in microRNA (miRNA)-induced gene silencing through uridylation of deadenylated miRNA targets. Also functions as an integral regulator of microRNA biogenesiS using 3 different uridylation mechanisms. Acts as a suppressor of miRNA biogenesis by mediating the terminal uridylation of some miRNA precursors, including that of let-7 (pre-let-7). Uridylated pre-let-7 RNA is not processed by Dicer and undergo degradation. Pre-let-7 oligouridylation is strongly enhanced in the presence of LIN28A. In the absence of LIN28A, TUT7 and TUT4 monouridylate group II pre-miRNAs, which includes most of pre-let7 members, that shapes an optimal 3' end overhang for efficient processing. Add oligo-U tails to truncated pre-miRNAS with a 5' overhang which may promote rapid degradation of non-functional pre-miRNA species. Does not play a role in replication-dependent histone mRNA degradation. Due to functional redundancy between TUT4 and TUT7, the identification of the specific role of each of these proteins is difficult. TUT4 and TUT7 restrict retrotransposition of long interspersed element-1 (LINE-1) in cooperation with MOV10 counteracting the RNA chaperonne activity of L1RE1. TUT7 uridylates LINE-1 mRNAs in the cytoplasm which inhibits initiation of reverse transcription once in the nucleus, whereas uridylation by TUT4 destabilizes mRNAs in cytoplasmic ribonucleoprotein granules. In Mus musculus (Mouse), this protein is Terminal uridylyltransferase 7.